The chain runs to 397 residues: ATP-dependent RNA helicase eIF4A (397 aa).

Residues 24 to 52 carry the Q motif motif; the sequence is DSFDEMNLKPELLRGIYAYGFERPSAIQQ. Residues 55–225 enclose the Helicase ATP-binding domain; the sequence is IMPVIKGHDV…TKFMREPVRI (171 aa). Position 68-75 (68-75) interacts with ATP; it reads AQSGTGKT. Residues 173 to 176 carry the DEAD box motif; the sequence is DEAD. The 162-residue stretch at 236 to 397 folds into the Helicase C-terminal domain; sequence GIKQFYIAVE…EMPMNVADLI (162 aa).

The protein belongs to the DEAD box helicase family. eIF4A subfamily. As to quaternary structure, component of the eIF4F complex, which composition varies with external and internal environmental conditions. It is composed of at least eIF4A, eIF4E and eIF4G.

The protein localises to the cytoplasm. The enzyme catalyses ATP + H2O = ADP + phosphate + H(+). ATP-dependent RNA helicase which is a subunit of the eIF4F complex involved in cap recognition and is required for mRNA binding to ribosome. In the current model of translation initiation, eIF4A unwinds RNA secondary structures in the 5'-UTR of mRNAs which is necessary to allow efficient binding of the small ribosomal subunit, and subsequent scanning for the initiator codon. This is ATP-dependent RNA helicase eIF4A (tif-1) from Neurospora crassa (strain ATCC 24698 / 74-OR23-1A / CBS 708.71 / DSM 1257 / FGSC 987).